We begin with the raw amino-acid sequence, 196 residues long: Neuropeptide prohormone-4 (196 aa).

Residues Met-1 to Lys-25 form the signal peptide. In terms of domain architecture, LDL-receptor class A spans Asp-50–Ala-90. Disulfide bonds link Cys-51/Cys-65, Cys-59/Cys-78, and Cys-72/Cys-89.

Expressed by the venom duct.

It is found in the secreted. This chain is Neuropeptide prohormone-4, found in Conus victoriae (Queen Victoria cone).